A 130-amino-acid polypeptide reads, in one-letter code: Small ribosomal subunit protein uS8 (130 aa).

The protein belongs to the universal ribosomal protein uS8 family. In terms of assembly, part of the 30S ribosomal subunit.

One of the primary rRNA binding proteins, it binds directly to 16S rRNA central domain where it helps coordinate assembly of the platform of the 30S subunit. The chain is Small ribosomal subunit protein uS8 (rps8) from Methanocaldococcus jannaschii (strain ATCC 43067 / DSM 2661 / JAL-1 / JCM 10045 / NBRC 100440) (Methanococcus jannaschii).